A 38-amino-acid polypeptide reads, in one-letter code: Photosystem II reaction center protein L (38 aa).

Residues 17 to 37 (SLYWGLLLIFVLAVLFSNYFF) form a helical membrane-spanning segment.

This sequence belongs to the PsbL family. PSII is composed of 1 copy each of membrane proteins PsbA, PsbB, PsbC, PsbD, PsbE, PsbF, PsbH, PsbI, PsbJ, PsbK, PsbL, PsbM, PsbT, PsbX, PsbY, PsbZ, Psb30/Ycf12, at least 3 peripheral proteins of the oxygen-evolving complex and a large number of cofactors. It forms dimeric complexes.

It is found in the plastid. The protein resides in the chloroplast thylakoid membrane. In terms of biological role, one of the components of the core complex of photosystem II (PSII). PSII is a light-driven water:plastoquinone oxidoreductase that uses light energy to abstract electrons from H(2)O, generating O(2) and a proton gradient subsequently used for ATP formation. It consists of a core antenna complex that captures photons, and an electron transfer chain that converts photonic excitation into a charge separation. This subunit is found at the monomer-monomer interface and is required for correct PSII assembly and/or dimerization. The chain is Photosystem II reaction center protein L from Adiantum capillus-veneris (Maidenhair fern).